The sequence spans 282 residues: Undecaprenyl-diphosphatase (282 aa).

Helical transmembrane passes span 90–110 (YWLG…GLVC), 121–141 (LWVV…AEYV), 165–185 (LALI…LFLG), 194–214 (FGFL…IPDA), 228–248 (QLLV…SWLL), and 256–276 (LYWF…LLAV).

Belongs to the UppP family.

The protein resides in the cell membrane. It carries out the reaction di-trans,octa-cis-undecaprenyl diphosphate + H2O = di-trans,octa-cis-undecaprenyl phosphate + phosphate + H(+). In terms of biological role, catalyzes the dephosphorylation of undecaprenyl diphosphate (UPP). Confers resistance to bacitracin. This is Undecaprenyl-diphosphatase from Mycobacterium leprae (strain Br4923).